Consider the following 230-residue polypeptide: Octanoyltransferase (230 aa).

Residues 40–218 (PSLDDVLILL…CFAEVFGVEL (179 aa)) form the BPL/LPL catalytic domain. Substrate is bound by residues 82 to 89 (RGGEVTYH), 149 to 151 (AIG), and 162 to 164 (GFA). Cys-180 acts as the Acyl-thioester intermediate in catalysis.

The protein belongs to the LipB family.

The protein resides in the cytoplasm. The catalysed reaction is octanoyl-[ACP] + L-lysyl-[protein] = N(6)-octanoyl-L-lysyl-[protein] + holo-[ACP] + H(+). Its pathway is protein modification; protein lipoylation via endogenous pathway; protein N(6)-(lipoyl)lysine from octanoyl-[acyl-carrier-protein]: step 1/2. Its function is as follows. Catalyzes the transfer of endogenously produced octanoic acid from octanoyl-acyl-carrier-protein onto the lipoyl domains of lipoate-dependent enzymes. Lipoyl-ACP can also act as a substrate although octanoyl-ACP is likely to be the physiological substrate. This chain is Octanoyltransferase, found in Nostoc punctiforme (strain ATCC 29133 / PCC 73102).